We begin with the raw amino-acid sequence, 188 residues long: ATP synthase subunit delta (188 aa).

Belongs to the ATPase delta chain family. As to quaternary structure, F-type ATPases have 2 components, F(1) - the catalytic core - and F(0) - the membrane proton channel. F(1) has five subunits: alpha(3), beta(3), gamma(1), delta(1), epsilon(1). F(0) has three main subunits: a(1), b(2) and c(10-14). The alpha and beta chains form an alternating ring which encloses part of the gamma chain. F(1) is attached to F(0) by a central stalk formed by the gamma and epsilon chains, while a peripheral stalk is formed by the delta and b chains.

The protein localises to the cell inner membrane. Functionally, f(1)F(0) ATP synthase produces ATP from ADP in the presence of a proton or sodium gradient. F-type ATPases consist of two structural domains, F(1) containing the extramembraneous catalytic core and F(0) containing the membrane proton channel, linked together by a central stalk and a peripheral stalk. During catalysis, ATP synthesis in the catalytic domain of F(1) is coupled via a rotary mechanism of the central stalk subunits to proton translocation. In terms of biological role, this protein is part of the stalk that links CF(0) to CF(1). It either transmits conformational changes from CF(0) to CF(1) or is implicated in proton conduction. The chain is ATP synthase subunit delta from Agrobacterium fabrum (strain C58 / ATCC 33970) (Agrobacterium tumefaciens (strain C58)).